The primary structure comprises 531 residues: Putative heme-binding protein HQ_1094A (531 aa).

Histidine 177 contributes to the heme binding site. Residues 269–340 are disordered; the sequence is AHGEAHGHAH…STNTNTQDSE (72 aa). Basic and acidic residues predominate over residues 271–281; it reads GEAHGHAHGDS. Residues 284–306 are compositionally biased toward gly residues; sequence GSGGGGGSSHGQSPGGASAGGSA. The segment covering 308–317 has biased composition (basic and acidic residues); that stretch reads GTEDADHSDS. Over residues 318–338 the composition is skewed to low complexity; sequence RSTTSADTTQSDTSTNTNTQD. Residues 441-529 enclose the ABM domain; the sequence is GTMGMFYTVK…VLSERPRHVF (89 aa).

This sequence in the N-terminal section; belongs to the ChdC family.

The sequence is that of Putative heme-binding protein HQ_1094A from Haloquadratum walsbyi (strain DSM 16790 / HBSQ001).